We begin with the raw amino-acid sequence, 455 residues long: 1,4-beta-D-glucan cellobiohydrolase C (455 aa).

Positions methionine 1–alanine 19 are cleaved as a signal peptide. Residues glutamine 20–leucine 55 form the CBM1 domain. 2 disulfide bridges follow: cysteine 27–cysteine 44 and cysteine 38–cysteine 54. The tract at residues threonine 59–threonine 92 is thr-rich linker. The segment at threonine 66–serine 86 is disordered. Residues alanine 93–asparagine 450 form a catalytic region. Aspartate 185 is an active-site residue. 2 cysteine pairs are disulfide-bonded: cysteine 186–cysteine 245 and cysteine 377–cysteine 424. Aspartate 231 acts as the Proton donor in catalysis. The Nucleophile role is filled by aspartate 410.

This sequence belongs to the glycosyl hydrolase 6 (cellulase B) family.

The protein resides in the secreted. The catalysed reaction is Hydrolysis of (1-&gt;4)-beta-D-glucosidic linkages in cellulose and cellotetraose, releasing cellobiose from the non-reducing ends of the chains.. The biological conversion of cellulose to glucose generally requires three types of hydrolytic enzymes: (1) Endoglucanases which cut internal beta-1,4-glucosidic bonds; (2) Exocellobiohydrolases that cut the disaccharide cellobiose from the non-reducing end of the cellulose polymer chain; (3) Beta-1,4-glucosidases which hydrolyze the cellobiose and other short cello-oligosaccharides to glucose. Active against carboxymethylcellulose, beta-glucan and lichenan. The polypeptide is 1,4-beta-D-glucan cellobiohydrolase C (cbhC) (Emericella nidulans (strain FGSC A4 / ATCC 38163 / CBS 112.46 / NRRL 194 / M139) (Aspergillus nidulans)).